The chain runs to 282 residues: NADPH-dependent 7-cyano-7-deazaguanine reductase (282 aa).

Position 88–90 (88–90 (IES)) interacts with substrate. Residue 90-91 (SK) coordinates NADPH. Residue cysteine 190 is the Thioimide intermediate of the active site. Catalysis depends on aspartate 197, which acts as the Proton donor. 229-230 (HE) is a binding site for substrate. 258–259 (RG) contributes to the NADPH binding site.

It belongs to the GTP cyclohydrolase I family. QueF type 2 subfamily. In terms of assembly, homodimer.

The protein localises to the cytoplasm. The enzyme catalyses 7-aminomethyl-7-carbaguanine + 2 NADP(+) = 7-cyano-7-deazaguanine + 2 NADPH + 3 H(+). Its pathway is tRNA modification; tRNA-queuosine biosynthesis. In terms of biological role, catalyzes the NADPH-dependent reduction of 7-cyano-7-deazaguanine (preQ0) to 7-aminomethyl-7-deazaguanine (preQ1). The chain is NADPH-dependent 7-cyano-7-deazaguanine reductase from Escherichia coli O17:K52:H18 (strain UMN026 / ExPEC).